The chain runs to 800 residues: Phenylalanine--tRNA ligase beta subunit (800 aa).

Residues 38–147 (GAELKGVVAA…PGTVPGTPIG (110 aa)) enclose the tRNA-binding domain. The B5 domain maps to 401 to 477 (VASPEVRMRW…RTLGYDAIPE (77 aa)). D455, D461, E464, and E465 together coordinate Mg(2+). One can recognise an FDX-ACB domain in the interval 708–799 (PRLPAVLRDV…LRERVGAELR (92 aa)).

The protein belongs to the phenylalanyl-tRNA synthetase beta subunit family. Type 1 subfamily. In terms of assembly, tetramer of two alpha and two beta subunits. It depends on Mg(2+) as a cofactor.

The protein localises to the cytoplasm. The enzyme catalyses tRNA(Phe) + L-phenylalanine + ATP = L-phenylalanyl-tRNA(Phe) + AMP + diphosphate + H(+). This chain is Phenylalanine--tRNA ligase beta subunit, found in Anaeromyxobacter dehalogenans (strain 2CP-C).